A 304-amino-acid polypeptide reads, in one-letter code: MSVDAVGGAVEGAPARLALRVQYLGGHFFGWQWQPGQRTVQQCLEEATERIARHPVRYHAAGRTDTGVHASGQVVHFDTHKKLAPETWVRGLNSLLPDDIAVRAAAYVSDHWHARFTALWREYRYCIHNSTVPDLFVRAQSWYYPYCPLDSEAVAAALATLPGHHDFRAFRRAGSSRPHSLVHVYTAECTREGEQIAIRVRANSFLYGMMRLLIGALAEVGSGRWSVERFAGLWQAGNREQVKYAAPPQGLCLVGVGYPDDPFKTNGIGFARCHTGQEKPEARLGNGDLESREERPPHEMSPLH.

Asp-65 functions as the Nucleophile in the catalytic mechanism. Tyr-123 lines the substrate pocket. The interval 274–304 (HTGQEKPEARLGNGDLESREERPPHEMSPLH) is disordered. The segment covering 289–298 (LESREERPPH) has biased composition (basic and acidic residues).

It belongs to the tRNA pseudouridine synthase TruA family. In terms of assembly, homodimer.

It carries out the reaction uridine(38/39/40) in tRNA = pseudouridine(38/39/40) in tRNA. Functionally, formation of pseudouridine at positions 38, 39 and 40 in the anticodon stem and loop of transfer RNAs. The sequence is that of tRNA pseudouridine synthase A from Gloeobacter violaceus (strain ATCC 29082 / PCC 7421).